The chain runs to 452 residues: Probable carboxypeptidase ACLA_088580 (452 aa).

The N-terminal stretch at 1-18 (MRSLTLLLSLSTALRSVA) is a signal peptide. N-linked (GlcNAc...) asparagine glycans are attached at residues N107 and N156. D175 is a binding site for Zn(2+). The active-site Proton acceptor is E207. Zn(2+) is bound at residue E208.

The protein belongs to the peptidase M20A family. The cofactor is Zn(2+).

The protein localises to the secreted. The protein is Probable carboxypeptidase ACLA_088580 of Aspergillus clavatus (strain ATCC 1007 / CBS 513.65 / DSM 816 / NCTC 3887 / NRRL 1 / QM 1276 / 107).